Consider the following 105-residue polypeptide: Large ribosomal subunit protein uL24 (105 aa).

It belongs to the universal ribosomal protein uL24 family. Part of the 50S ribosomal subunit.

Its function is as follows. One of two assembly initiator proteins, it binds directly to the 5'-end of the 23S rRNA, where it nucleates assembly of the 50S subunit. In terms of biological role, one of the proteins that surrounds the polypeptide exit tunnel on the outside of the subunit. This is Large ribosomal subunit protein uL24 from Xylella fastidiosa (strain M23).